The primary structure comprises 477 residues: E3 ubiquitin-protein ligase TRIM17 (477 aa).

An RING-type zinc finger spans residues 16–66 (CSICLDYFTDPVMTACGHNFCRECIQMSWEKGKGKKGKKKQKGSFPCPECR). The B box-type zinc-finger motif lies at 94 to 135 (HKRDLCQIHQEPLKLFCQDDQTPICVVCREAQEHRMHRVLPL). Residues C99, H102, C121, and H127 each coordinate Zn(2+). The stretch at 135–225 (LDEAAREYKL…GKLQDSKASL (91 aa)) forms a coiled coil. Residues 276 to 475 (AIKTVCRVPG…MVISTVTMWV (200 aa)) form the B30.2/SPRY domain.

This sequence belongs to the TRIM/RBCC family. As to quaternary structure, interacts (via coiled coil) with TRIM44 (via coiled coil). Interacts with TRIM28; this interaction prevents TRIM28 activity on BCL2A1. Interacts with TRIM41; this interaction prevents TRIM41 activity on ZSCAN2. Interacts with BECN1. Interacts with NFATC3 and NFATC4; these interactions prevent NFATC3 and NFATC4 nuclear localization. In terms of processing, auto-ubiquitinated. As to expression, expressed almost exclusively in the testis.

Its subcellular location is the cytoplasm. The protein resides in the lysosome. It carries out the reaction S-ubiquitinyl-[E2 ubiquitin-conjugating enzyme]-L-cysteine + [acceptor protein]-L-lysine = [E2 ubiquitin-conjugating enzyme]-L-cysteine + N(6)-ubiquitinyl-[acceptor protein]-L-lysine.. It participates in protein modification; protein ubiquitination. In terms of biological role, E3 ubiquitin ligase that plays important roles in the regulation of neuronal apoptosis, selective autophagy or cell proliferation. Stimulates the degradation of kinetochore ZW10 interacting protein ZWINT in a proteasome-dependent manner, leading to negative regulation of cell proliferation. Inhibits autophagic degradation of diverse known targets while contributing to autophagy of midbodies. Autophagy-inhibitory activity involves MCL1, which TRIM17 assembles into complexes with the key autophagy regulator BECN1. Controls neuronal apoptosis by mediating ubiquitination and degradation of MCL1 to initiate neuronal death. In addition, regulates NFAT transcription factors NFATC3 and NFATC4 activities by preventing their nuclear localization, thus inhibiting their transcriptional activities. Decreases TRIM41-mediated degradation of ZSCAN2 thereby stimulating alpha-synuclein/SNCA transcription in neuronal cells. Prevents the E3 ubiquitin-ligase activity of TRIM28 and its interaction with anti-apoptotic BCL2A1, blocking TRIM28 from ubiquitinating BCL2A1. This is E3 ubiquitin-protein ligase TRIM17 (Trim17) from Rattus norvegicus (Rat).